Reading from the N-terminus, the 458-residue chain is Argininosuccinate lyase (458 aa).

Belongs to the lyase 1 family. Argininosuccinate lyase subfamily.

The protein localises to the cytoplasm. It carries out the reaction 2-(N(omega)-L-arginino)succinate = fumarate + L-arginine. Its pathway is amino-acid biosynthesis; L-arginine biosynthesis; L-arginine from L-ornithine and carbamoyl phosphate: step 3/3. This chain is Argininosuccinate lyase, found in Salmonella dublin (strain CT_02021853).